A 360-amino-acid polypeptide reads, in one-letter code: Chorismate synthase (360 aa).

The NADP(+) site is built by Arg48 and Arg54. FMN is bound by residues 125–127, 242–243, Gly283, 298–302, and Arg324; these read RSS, NG, and KPTSS.

This sequence belongs to the chorismate synthase family. In terms of assembly, homotetramer. It depends on FMNH2 as a cofactor.

It carries out the reaction 5-O-(1-carboxyvinyl)-3-phosphoshikimate = chorismate + phosphate. Its pathway is metabolic intermediate biosynthesis; chorismate biosynthesis; chorismate from D-erythrose 4-phosphate and phosphoenolpyruvate: step 7/7. Catalyzes the anti-1,4-elimination of the C-3 phosphate and the C-6 proR hydrogen from 5-enolpyruvylshikimate-3-phosphate (EPSP) to yield chorismate, which is the branch point compound that serves as the starting substrate for the three terminal pathways of aromatic amino acid biosynthesis. This reaction introduces a second double bond into the aromatic ring system. This chain is Chorismate synthase, found in Gluconobacter oxydans (strain 621H) (Gluconobacter suboxydans).